The primary structure comprises 108 residues: UPF0145 protein sll118 (108 aa).

It belongs to the UPF0145 family.

This is UPF0145 protein sll118 from Synechocystis sp. (strain ATCC 27184 / PCC 6803 / Kazusa).